The following is a 303-amino-acid chain: Elongation factor Ts (303 aa).

The involved in Mg(2+) ion dislocation from EF-Tu stretch occupies residues 81–84; it reads TDFV.

It belongs to the EF-Ts family.

The protein localises to the cytoplasm. Its function is as follows. Associates with the EF-Tu.GDP complex and induces the exchange of GDP to GTP. It remains bound to the aminoacyl-tRNA.EF-Tu.GTP complex up to the GTP hydrolysis stage on the ribosome. In Mesomycoplasma hyopneumoniae (strain J / ATCC 25934 / NCTC 10110) (Mycoplasma hyopneumoniae), this protein is Elongation factor Ts.